Reading from the N-terminus, the 448-residue chain is UPF0210 protein Pisl_0759 (448 aa).

This sequence belongs to the UPF0210 family.

This Pyrobaculum islandicum (strain DSM 4184 / JCM 9189 / GEO3) protein is UPF0210 protein Pisl_0759.